Consider the following 178-residue polypeptide: Gamma-crystallin S (178 aa).

Ser-2 is modified (N-acetylserine). Positions 2–5 (SKSV) are N-terminal arm. 2 Beta/gamma crystallin 'Greek key' domains span residues 6–44 (AKITFYDDKNFQGHHYECDSDCPDFHTYLSCCNSIRVTG) and 45–87 (GAWV…KVIH). The interval 88–93 (LSSGGQ) is connecting peptide. 2 Beta/gamma crystallin 'Greek key' domains span residues 94 to 134 (YKLQ…KVLD) and 135 to 177 (GVWV…RRIM).

This sequence belongs to the beta/gamma-crystallin family. As to quaternary structure, monomer.

Its function is as follows. Crystallins are the dominant structural components of the vertebrate eye lens. This chain is Gamma-crystallin S (CRYGS), found in Macropus fuliginosus (Western gray kangaroo).